A 251-amino-acid polypeptide reads, in one-letter code: Pyrroloquinoline-quinone synthase (251 aa).

The protein belongs to the PqqC family.

The enzyme catalyses 6-(2-amino-2-carboxyethyl)-7,8-dioxo-1,2,3,4,7,8-hexahydroquinoline-2,4-dicarboxylate + 3 O2 = pyrroloquinoline quinone + 2 H2O2 + 2 H2O + H(+). Its pathway is cofactor biosynthesis; pyrroloquinoline quinone biosynthesis. In terms of biological role, ring cyclization and eight-electron oxidation of 3a-(2-amino-2-carboxyethyl)-4,5-dioxo-4,5,6,7,8,9-hexahydroquinoline-7,9-dicarboxylic-acid to PQQ. The chain is Pyrroloquinoline-quinone synthase from Klebsiella pneumoniae subsp. pneumoniae (strain ATCC 700721 / MGH 78578).